The sequence spans 569 residues: Falcipain-1 (569 aa).

The Cytoplasmic segment spans residues 1-35; the sequence is MVAIKEMKEFAFARPSLVETLNKKKKFLKKKEKRT. The propeptide at 1–332 is activation peptide; sequence MVAIKEMKEF…KRNEKDIFSK (332 aa). Residues 36–56 traverse the membrane as a helical; Signal-anchor for type II membrane protein segment; sequence FVLSIYAFITFIIFCIGILYF. The Lumenal portion of the chain corresponds to 57-569; sequence TNKSSAHNNN…IGEEVFYPIL (513 aa). N-linked (GlcNAc...) asparagine glycosylation is found at N58, N98, N121, and N127. The segment at 97–118 is disordered; it reads LNESSNEEDEEKYTLNSETYNN. 3 cysteine pairs are disulfide-bonded: C354–C395, C388–C428, and C413–C433. The active site involves C357. N-linked (GlcNAc...) asparagine glycans are attached at residues N479 and N487. Residues C482 and C558 are joined by a disulfide bond. Catalysis depends on residues H488 and N533.

Belongs to the peptidase C1 family. In terms of processing, contains disulfide bonds.

It is found in the membrane. Its subcellular location is the cytoplasmic granule. Its function is as follows. Cysteine protease. In the mosquito midgut, required for parasite development. This Plasmodium falciparum (isolate 3D7) protein is Falcipain-1.